A 1399-amino-acid polypeptide reads, in one-letter code: DNA-directed RNA polymerase subunit beta' (1399 aa).

Zn(2+) is bound by residues cysteine 70, cysteine 72, cysteine 85, and cysteine 88. Aspartate 460, aspartate 462, and aspartate 464 together coordinate Mg(2+). Zn(2+) is bound by residues cysteine 814, cysteine 888, cysteine 895, and cysteine 898.

It belongs to the RNA polymerase beta' chain family. As to quaternary structure, the RNAP catalytic core consists of 2 alpha, 1 beta, 1 beta' and 1 omega subunit. When a sigma factor is associated with the core the holoenzyme is formed, which can initiate transcription. Mg(2+) is required as a cofactor. Zn(2+) serves as cofactor.

It carries out the reaction RNA(n) + a ribonucleoside 5'-triphosphate = RNA(n+1) + diphosphate. DNA-dependent RNA polymerase catalyzes the transcription of DNA into RNA using the four ribonucleoside triphosphates as substrates. The chain is DNA-directed RNA polymerase subunit beta' from Pseudomonas putida (strain GB-1).